A 310-amino-acid polypeptide reads, in one-letter code: Phosphoribosylaminoimidazole-succinocarboxamide synthase (310 aa).

This sequence belongs to the SAICAR synthetase family.

It catalyses the reaction 5-amino-1-(5-phospho-D-ribosyl)imidazole-4-carboxylate + L-aspartate + ATP = (2S)-2-[5-amino-1-(5-phospho-beta-D-ribosyl)imidazole-4-carboxamido]succinate + ADP + phosphate + 2 H(+). Its pathway is purine metabolism; IMP biosynthesis via de novo pathway; 5-amino-1-(5-phospho-D-ribosyl)imidazole-4-carboxamide from 5-amino-1-(5-phospho-D-ribosyl)imidazole-4-carboxylate: step 1/2. In Xanthomonas campestris pv. campestris (strain B100), this protein is Phosphoribosylaminoimidazole-succinocarboxamide synthase.